The sequence spans 151 residues: Cysteine proteinase inhibitor 10 (151 aa).

Positions 1 to 22 (MATSPMLFLVSLLLVLVAAATG) are cleaved as a signal peptide. A Cystatin domain is found at 40–109 (GGRTEIRDVG…GVAYYLKVAA (70 aa)). The Secondary area of contact motif lies at 96–100 (QVVSG).

The protein belongs to the cystatin family. Phytocystatin subfamily.

The protein resides in the secreted. Its function is as follows. Specific inhibitor of cysteine proteinases. Probably involved in the regulation of endogenous processes and in defense against pests and pathogens. The sequence is that of Cysteine proteinase inhibitor 10 from Oryza sativa subsp. indica (Rice).